A 588-amino-acid polypeptide reads, in one-letter code: Lysophospholipase 2 (588 aa).

The disordered stretch occupies residues 15 to 38 (NRALPNAPDGYTPQGETCPSKRPS). In terms of domain architecture, PLA2c spans 31 to 574 (TCPSKRPSIR…KTYCWNGTIN (544 aa)). Asn-41, Asn-58, Asn-77, Asn-84, Asn-88, Asn-119, Asn-123, Asn-157, Asn-167, Asn-228, Asn-272, Asn-302, Asn-340, Asn-431, Asn-449, Asn-478, Asn-481, Asn-501, Asn-510, Asn-529, Asn-553, Asn-570, and Asn-574 each carry an N-linked (GlcNAc...) asparagine glycan.

Belongs to the lysophospholipase family.

The enzyme catalyses a 1-acyl-sn-glycero-3-phosphocholine + H2O = sn-glycerol 3-phosphocholine + a fatty acid + H(+). Functionally, catalyzes the release of fatty acids from lysophospholipids. The chain is Lysophospholipase 2 (plb2) from Aspergillus fumigatus (strain ATCC MYA-4609 / CBS 101355 / FGSC A1100 / Af293) (Neosartorya fumigata).